The chain runs to 294 residues: Acetylglutamate kinase (294 aa).

Residues 69 to 70, arginine 91, and asparagine 190 contribute to the substrate site; that span reads GG.

Belongs to the acetylglutamate kinase family. ArgB subfamily.

Its subcellular location is the cytoplasm. It carries out the reaction N-acetyl-L-glutamate + ATP = N-acetyl-L-glutamyl 5-phosphate + ADP. The protein operates within amino-acid biosynthesis; L-arginine biosynthesis; N(2)-acetyl-L-ornithine from L-glutamate: step 2/4. In terms of biological role, catalyzes the ATP-dependent phosphorylation of N-acetyl-L-glutamate. This is Acetylglutamate kinase from Mycobacterium tuberculosis (strain CDC 1551 / Oshkosh).